The following is a 274-amino-acid chain: Bis(5'-nucleosyl)-tetraphosphatase, symmetrical (274 aa).

This sequence belongs to the Ap4A hydrolase family.

It catalyses the reaction P(1),P(4)-bis(5'-adenosyl) tetraphosphate + H2O = 2 ADP + 2 H(+). Hydrolyzes diadenosine 5',5'''-P1,P4-tetraphosphate to yield ADP. The polypeptide is Bis(5'-nucleosyl)-tetraphosphatase, symmetrical (Shewanella baltica (strain OS223)).